We begin with the raw amino-acid sequence, 122 residues long: Ribosome-binding factor A (122 aa).

The protein belongs to the RbfA family. Monomer. Binds 30S ribosomal subunits, but not 50S ribosomal subunits or 70S ribosomes.

The protein resides in the cytoplasm. In terms of biological role, one of several proteins that assist in the late maturation steps of the functional core of the 30S ribosomal subunit. Associates with free 30S ribosomal subunits (but not with 30S subunits that are part of 70S ribosomes or polysomes). Required for efficient processing of 16S rRNA. May interact with the 5'-terminal helix region of 16S rRNA. The chain is Ribosome-binding factor A from Burkholderia thailandensis (strain ATCC 700388 / DSM 13276 / CCUG 48851 / CIP 106301 / E264).